A 146-amino-acid chain; its full sequence is D-aminoacyl-tRNA deacylase (146 aa).

A Gly-cisPro motif, important for rejection of L-amino acids motif is present at residues 138 to 139; the sequence is GP.

Belongs to the DTD family. In terms of assembly, homodimer.

Its subcellular location is the cytoplasm. It carries out the reaction glycyl-tRNA(Ala) + H2O = tRNA(Ala) + glycine + H(+). It catalyses the reaction a D-aminoacyl-tRNA + H2O = a tRNA + a D-alpha-amino acid + H(+). Functionally, an aminoacyl-tRNA editing enzyme that deacylates mischarged D-aminoacyl-tRNAs. Also deacylates mischarged glycyl-tRNA(Ala), protecting cells against glycine mischarging by AlaRS. Acts via tRNA-based rather than protein-based catalysis; rejects L-amino acids rather than detecting D-amino acids in the active site. By recycling D-aminoacyl-tRNA to D-amino acids and free tRNA molecules, this enzyme counteracts the toxicity associated with the formation of D-aminoacyl-tRNA entities in vivo and helps enforce protein L-homochirality. This is D-aminoacyl-tRNA deacylase from Xanthomonas axonopodis pv. citri (strain 306).